The chain runs to 359 residues: DNA replication and repair protein RecF (359 aa).

Residue 30–37 participates in ATP binding; sequence GPNAKGKT.

The protein belongs to the RecF family.

It is found in the cytoplasm. Its function is as follows. The RecF protein is involved in DNA metabolism; it is required for DNA replication and normal SOS inducibility. RecF binds preferentially to single-stranded, linear DNA. It also seems to bind ATP. The protein is DNA replication and repair protein RecF of Protochlamydia amoebophila (strain UWE25).